Consider the following 431-residue polypeptide: Histidinol dehydrogenase (431 aa).

Residues Y127, Q189, and N212 each contribute to the NAD(+) site. Residues S237, Q259, and H262 each coordinate substrate. The Zn(2+) site is built by Q259 and H262. Active-site proton acceptor residues include E326 and H327. Substrate-binding residues include H327, D360, E414, and H419. Residue D360 participates in Zn(2+) binding. H419 provides a ligand contact to Zn(2+).

The protein belongs to the histidinol dehydrogenase family. Zn(2+) serves as cofactor.

The enzyme catalyses L-histidinol + 2 NAD(+) + H2O = L-histidine + 2 NADH + 3 H(+). It participates in amino-acid biosynthesis; L-histidine biosynthesis; L-histidine from 5-phospho-alpha-D-ribose 1-diphosphate: step 9/9. Its function is as follows. Catalyzes the sequential NAD-dependent oxidations of L-histidinol to L-histidinaldehyde and then to L-histidine. The protein is Histidinol dehydrogenase of Xanthomonas euvesicatoria pv. vesicatoria (strain 85-10) (Xanthomonas campestris pv. vesicatoria).